The following is a 213-amino-acid chain: MMPDQPATACPLVLASASPRRAALLAQIGVIPALTLATDIDETPLKGEVPLKGEVPRLLSRRLAQGKADTAIRVLREQSDAPLAAPFILAADTVVAVGRRALPKAETEAEARQCLTLLSGRRHHVWTTVVVIAPDGKRAERIVESAVTFNRMTDLQQEAYIASGEWRGKAGGYAIQGLAAAYIRFLSGSYSNVVGLPLFETAQLLRGLGFRSL.

The active-site Proton acceptor is the Asp-92.

It belongs to the Maf family. YhdE subfamily. A divalent metal cation is required as a cofactor.

The protein resides in the cytoplasm. It catalyses the reaction dTTP + H2O = dTMP + diphosphate + H(+). It carries out the reaction UTP + H2O = UMP + diphosphate + H(+). Functionally, nucleoside triphosphate pyrophosphatase that hydrolyzes dTTP and UTP. May have a dual role in cell division arrest and in preventing the incorporation of modified nucleotides into cellular nucleic acids. This is dTTP/UTP pyrophosphatase from Granulibacter bethesdensis (strain ATCC BAA-1260 / CGDNIH1).